We begin with the raw amino-acid sequence, 416 residues long: L-cysteine:1D-myo-inositol 2-amino-2-deoxy-alpha-D-glucopyranoside ligase (416 aa).

Cys-45 contacts Zn(2+). Residues 45 to 48, Thr-60, and 83 to 85 each bind L-cysteinyl-5'-AMP; these read CGIT and NVT. The 'HIGH' region signature appears at 47 to 57; that stretch reads ITPYDSTHLGH. A 'ERGGDP' region motif is present at residues 191 to 196; it reads ERGGDP. Trp-232 contributes to the L-cysteinyl-5'-AMP binding site. Cys-236 contributes to the Zn(2+) binding site. 254–256 contributes to the L-cysteinyl-5'-AMP binding site; it reads GSD. Position 261 (His-261) interacts with Zn(2+). Val-286 contributes to the L-cysteinyl-5'-AMP binding site. A 'KMSKS' region motif is present at residues 292-296; it reads KMSKS.

It belongs to the class-I aminoacyl-tRNA synthetase family. MshC subfamily. In terms of assembly, monomer. It depends on Zn(2+) as a cofactor.

It catalyses the reaction 1D-myo-inositol 2-amino-2-deoxy-alpha-D-glucopyranoside + L-cysteine + ATP = 1D-myo-inositol 2-(L-cysteinylamino)-2-deoxy-alpha-D-glucopyranoside + AMP + diphosphate + H(+). In terms of biological role, catalyzes the ATP-dependent condensation of GlcN-Ins and L-cysteine to form L-Cys-GlcN-Ins. The protein is L-cysteine:1D-myo-inositol 2-amino-2-deoxy-alpha-D-glucopyranoside ligase of Brachybacterium faecium (strain ATCC 43885 / DSM 4810 / JCM 11609 / LMG 19847 / NBRC 14762 / NCIMB 9860 / 6-10).